A 424-amino-acid polypeptide reads, in one-letter code: Cytoplasmic tRNA 2-thiolation protein 2 (424 aa).

The segment at proline 357 to aspartate 385 is disordered. The span at leucine 368–aspartate 385 shows a compositional bias: basic and acidic residues.

Belongs to the CTU2/NCS2 family.

It is found in the cytoplasm. The protein operates within tRNA modification; 5-methoxycarbonylmethyl-2-thiouridine-tRNA biosynthesis. In terms of biological role, plays a central role in 2-thiolation of mcm(5)S(2)U at tRNA wobble positions of tRNA(Lys), tRNA(Glu) and tRNA(Gln). May act by forming a heterodimer with NCS6 that ligates sulfur from thiocarboxylated URM1 onto the uridine of tRNAs at wobble position. Prior mcm(5) tRNA modification by the elongator complex is required for 2-thiolation. May also be involved in protein urmylation. In Yarrowia lipolytica (strain CLIB 122 / E 150) (Yeast), this protein is Cytoplasmic tRNA 2-thiolation protein 2.